The sequence spans 233 residues: MLFEPPLISATLVRRYKRFLADVVLASGEEITVHCPNTGSMKNCVVPHSPCYLSDSNNPKRKYRYTLELVTTPDGDLAGVNTGRANALVEEAIRAGVVPELAGYQIQREQKYGEEGSRIDLLLSRGEERCFVEVKNVTLAEPGGQGLFPDAVSVRGAKHLRELMYVRAQGHRAVLFFCVQHTGVNLVSPADDIDAVYGQLLREAAGAGVEIFAVRATLGSCEIKLRELLPVVL.

Belongs to the SfsA family.

This chain is Sugar fermentation stimulation protein homolog, found in Teredinibacter turnerae (strain ATCC 39867 / T7901).